An 86-amino-acid chain; its full sequence is Large ribosomal subunit protein bL27 (86 aa).

Residues 1–26 (MATKKAGGSSRNGRDSAGRRLGIKKS) are disordered.

This sequence belongs to the bacterial ribosomal protein bL27 family.

This Rickettsia typhi (strain ATCC VR-144 / Wilmington) protein is Large ribosomal subunit protein bL27.